A 423-amino-acid polypeptide reads, in one-letter code: Gamma-glutamyl phosphate reductase (423 aa).

Belongs to the gamma-glutamyl phosphate reductase family.

Its subcellular location is the cytoplasm. The enzyme catalyses L-glutamate 5-semialdehyde + phosphate + NADP(+) = L-glutamyl 5-phosphate + NADPH + H(+). Its pathway is amino-acid biosynthesis; L-proline biosynthesis; L-glutamate 5-semialdehyde from L-glutamate: step 2/2. Catalyzes the NADPH-dependent reduction of L-glutamate 5-phosphate into L-glutamate 5-semialdehyde and phosphate. The product spontaneously undergoes cyclization to form 1-pyrroline-5-carboxylate. This is Gamma-glutamyl phosphate reductase from Roseiflexus castenholzii (strain DSM 13941 / HLO8).